A 688-amino-acid chain; its full sequence is Polyribonucleotide nucleotidyltransferase (688 aa).

2 residues coordinate Mg(2+): Asp484 and Asp490. In terms of domain architecture, KH spans 550 to 609 (PTTEIFNVAPDKIVEIIGQGGRVIREIVEKFEVKIDLNKPSGEVKIMGNKERVLKTKEFI). The S1 motif domain maps to 626 to 688 (DEVLEAQVKR…NKGKIALDLA (63 aa)).

Belongs to the polyribonucleotide nucleotidyltransferase family. Mg(2+) serves as cofactor.

Its subcellular location is the cytoplasm. It carries out the reaction RNA(n+1) + phosphate = RNA(n) + a ribonucleoside 5'-diphosphate. Functionally, involved in mRNA degradation. Catalyzes the phosphorolysis of single-stranded polyribonucleotides processively in the 3'- to 5'-direction. In Helicobacter pylori (strain Shi470), this protein is Polyribonucleotide nucleotidyltransferase.